The following is an 88-amino-acid chain: Small ribosomal subunit protein bS20 (88 aa).

Residues 1–17 (MANIKSNEKRLRQDIKR) are compositionally biased toward basic and acidic residues. Residues 1–25 (MANIKSNEKRLRQDIKRNLNNKGQK) form a disordered region.

Belongs to the bacterial ribosomal protein bS20 family.

In terms of biological role, binds directly to 16S ribosomal RNA. The sequence is that of Small ribosomal subunit protein bS20 from Mycoplasma genitalium (strain ATCC 33530 / DSM 19775 / NCTC 10195 / G37) (Mycoplasmoides genitalium).